We begin with the raw amino-acid sequence, 336 residues long: Glycerol-3-phosphate dehydrogenase [NAD(P)+] (336 aa).

4 residues coordinate NADPH: serine 16, tyrosine 17, histidine 37, and lysine 111. Positions 111, 140, and 142 each coordinate sn-glycerol 3-phosphate. Alanine 144 lines the NADPH pocket. Sn-glycerol 3-phosphate contacts are provided by lysine 196, aspartate 249, serine 259, arginine 260, and asparagine 261. The active-site Proton acceptor is lysine 196. Arginine 260 contacts NADPH. 2 residues coordinate NADPH: valine 284 and glutamate 286.

This sequence belongs to the NAD-dependent glycerol-3-phosphate dehydrogenase family.

It localises to the cytoplasm. It catalyses the reaction sn-glycerol 3-phosphate + NAD(+) = dihydroxyacetone phosphate + NADH + H(+). The catalysed reaction is sn-glycerol 3-phosphate + NADP(+) = dihydroxyacetone phosphate + NADPH + H(+). The protein operates within membrane lipid metabolism; glycerophospholipid metabolism. In terms of biological role, catalyzes the reduction of the glycolytic intermediate dihydroxyacetone phosphate (DHAP) to sn-glycerol 3-phosphate (G3P), the key precursor for phospholipid synthesis. This chain is Glycerol-3-phosphate dehydrogenase [NAD(P)+], found in Actinobacillus pleuropneumoniae serotype 3 (strain JL03).